The chain runs to 139 residues: Putative nickel-responsive regulator (139 aa).

H79, H90, H92, and C98 together coordinate Ni(2+).

It belongs to the transcriptional regulatory CopG/NikR family. It depends on Ni(2+) as a cofactor.

Transcriptional regulator. The protein is Putative nickel-responsive regulator of Geotalea uraniireducens (strain Rf4) (Geobacter uraniireducens).